We begin with the raw amino-acid sequence, 347 residues long: Farnesyl pyrophosphate synthase ERG20 (347 aa).

The isopentenyl diphosphate site is built by K50, R53, and Q88. D95 and D99 together coordinate Mg(2+). Dimethylallyl diphosphate is bound at residue R104. Residue R105 coordinates isopentenyl diphosphate. 5 residues coordinate dimethylallyl diphosphate: K192, T193, Q232, K249, and K258.

The protein belongs to the FPP/GGPP synthase family. Mg(2+) is required as a cofactor.

It carries out the reaction isopentenyl diphosphate + dimethylallyl diphosphate = (2E)-geranyl diphosphate + diphosphate. The catalysed reaction is isopentenyl diphosphate + (2E)-geranyl diphosphate = (2E,6E)-farnesyl diphosphate + diphosphate. Its pathway is isoprenoid biosynthesis; farnesyl diphosphate biosynthesis; farnesyl diphosphate from geranyl diphosphate and isopentenyl diphosphate: step 1/1. The protein operates within isoprenoid biosynthesis; geranyl diphosphate biosynthesis; geranyl diphosphate from dimethylallyl diphosphate and isopentenyl diphosphate: step 1/1. In terms of biological role, farnesyl pyrophosphate synthase; part of the second module of ergosterol biosynthesis pathway that includes the middle steps of the pathway. ERG20 catalyzes the sequential condensation of isopentenyl pyrophosphate with dimethylallyl pyrophosphate, and then with the resultant geranylpyrophosphate to the ultimate product farnesyl pyrophosphate. The second module is carried out in the vacuole and involves the formation of farnesyl diphosphate, which is also an important intermediate in the biosynthesis of ubiquinone, dolichol, heme and prenylated proteins. Activity by the mevalonate kinase ERG12 (FG05912) first converts mevalonate into 5-phosphomevalonate. 5-phosphomevalonate is then further converted to 5-diphosphomevalonate by the phosphomevalonate kinase ERG8 (FG09764). The diphosphomevalonate decarboxylase ERG19 (FG10424) then produces isopentenyl diphosphate. The isopentenyl-diphosphate delta-isomerase IDI1 (FG09722) then catalyzes the 1,3-allylic rearrangement of the homoallylic substrate isopentenyl (IPP) to its highly electrophilic allylic isomer, dimethylallyl diphosphate (DMAPP). Finally the farnesyl diphosphate synthase ERG20 (FG06784) catalyzes the sequential condensation of isopentenyl pyrophosphate with dimethylallyl pyrophosphate, and then with the resultant geranylpyrophosphate to the ultimate product farnesyl pyrophosphate. The polypeptide is Farnesyl pyrophosphate synthase ERG20 (Gibberella zeae (strain ATCC MYA-4620 / CBS 123657 / FGSC 9075 / NRRL 31084 / PH-1) (Wheat head blight fungus)).